The primary structure comprises 117 residues: MDGSTIVFILTMVCLFVYTVKHRGAKQVPSRTVQDAKPAPSVATNDPSPEPVPSAPEERVARLNRHGSDRKRAVNSDMVEIVMTMAPHVPQEKVVQDLRNTGSIEHTMENIFAGKLD.

A disordered region spans residues 27-74 (QVPSRTVQDAKPAPSVATNDPSPEPVPSAPEERVARLNRHGSDRKRAV). Residue Lys37 forms a Glycyl lysine isopeptide (Lys-Gly) (interchain with G-Cter in ubiquitin) linkage. Phosphoserine is present on Ser48. Residues 56 to 74 (PEERVARLNRHGSDRKRAV) are compositionally biased toward basic and acidic residues. The region spanning 74–116 (VNSDMVEIVMTMAPHVPQEKVVQDLRNTGSIEHTMENIFAGKL) is the CUE domain.

In terms of processing, ubiquitinated.

The protein resides in the cytoplasm. It is found in the endoplasmic reticulum. In Saccharomyces cerevisiae (strain ATCC 204508 / S288c) (Baker's yeast), this protein is CUE domain-containing protein CUE4 (CUE4).